The sequence spans 481 residues: Exodeoxyribonuclease I (481 aa).

Positions 12–193 (LFYDYETFGK…SSDVYATMNI (182 aa)) constitute an Exonuclease domain. Mg(2+)-binding residues include Asp15, Glu17, and Asp186. Glu17 serves as a coordination point for substrate. An ExoI SH3-like domain is found at 202-350 (PKLFNFFFKY…KLKKFLCSIA (149 aa)). The ExoI C-terminal domain maps to 356–471 (NGSNVDLKMY…ELFEYVKYTR (116 aa)).

As to quaternary structure, monomer. Interacts with ssb (via C-terminus); this interaction stimulates the exonuclease activity by recruiting the enzyme to its substrate. The cofactor is Mg(2+).

The catalysed reaction is Exonucleolytic cleavage in the 3'- to 5'-direction to yield nucleoside 5'-phosphates.. Functionally, degrades single-stranded DNA (ssDNA) in a highly processive manner. Also functions as a DNA deoxyribophosphodiesterase that releases deoxyribose-phosphate moieties following the cleavage of DNA at an apurinic/apyrimidinic (AP) site by either an AP endonuclease or AP lyase. The protein is Exodeoxyribonuclease I (sbcB) of Buchnera aphidicola subsp. Baizongia pistaciae (strain Bp).